The primary structure comprises 147 residues: Holo-[acyl-carrier-protein] synthase (147 aa).

Residues Asp-7 and Glu-60 each coordinate Mg(2+).

Belongs to the P-Pant transferase superfamily. AcpS family. The cofactor is Mg(2+).

It localises to the cytoplasm. It carries out the reaction apo-[ACP] + CoA = holo-[ACP] + adenosine 3',5'-bisphosphate + H(+). Transfers the 4'-phosphopantetheine moiety from coenzyme A to a Ser of acyl-carrier-protein. The polypeptide is Holo-[acyl-carrier-protein] synthase (Bifidobacterium animalis subsp. lactis (strain AD011)).